Reading from the N-terminus, the 248-residue chain is Chitin deacetylase (248 aa).

An N-terminal signal peptide occupies residues 1 to 26 (MHFSTLFGAAATAALAGSTNASPLAR). 2 disulfide bridges follow: C38–C237 and C148–C152. Residues 42–232 (GLVALTYDDG…TLKSKGYRAV (191 aa)) form the NodB homology domain. Residue D49 is the Proton acceptor of the active site. D49 is a binding site for acetate. Co(2+)-binding residues include D50, H104, and H108. Y145 is a binding site for acetate. H206 (proton donor) is an active-site residue.

It belongs to the polysaccharide deacetylase family. Monomer. Requires Co(2+) as cofactor. In terms of processing, N-glycosylated.

Its subcellular location is the secreted. The catalysed reaction is [(1-&gt;4)-N-acetyl-beta-D-glucosaminyl](n) + n H2O = chitosan + n acetate. Hydrolyzes the N-acetamido groups of N-acetyl-D-glucosamine polymers in chitin to form chitosan and acetate. May play a role in evasion of the host immune response; plant chitinases liberate chitin molecules from the fungal cell wall which act as elicitors of the plant immune response, deacetylation of the liberated chitin neutralizes elicitor activity. The sequence is that of Chitin deacetylase from Colletotrichum lindemuthianum (Bean anthracnose fungus).